A 540-amino-acid chain; its full sequence is Telomerase Cajal body protein 1 (540 aa).

Residues 1–10 are compositionally biased toward pro residues; the sequence is MKTPEAPPLA. A disordered region spans residues 1 to 126; it reads MKTPEAPPLA…GEDVEGVSEE (126 aa). Phosphoserine occurs at positions 26, 30, 54, 64, 85, and 90. Over residues 116–126 the composition is skewed to acidic residues; the sequence is PGEDVEGVSEE. WD repeat units follow at residues 158-197, 213-258, 263-304, 314-355, 356-396, and 402-441; these read QPEN…YNEG, EGDT…LRAS, NHLD…RDCE, GQSG…ALLG, GHQG…HPLW, and VTTN…LESK. Thr-480 is subject to Phosphothreonine. Phosphoserine is present on Ser-482. Residues 520–540 form a disordered region; the sequence is SDAHQEEMGQGRTEGGGGEFT. Residues 531 to 540 show a composition bias toward gly residues; sequence RTEGGGGEFT.

Belongs to the TCAB1 family. Component of the telomerase holoenzyme complex composed of one molecule of TERT, one molecule of WRAP53/TCAB1, two molecules of H/ACA ribonucleoprotein complex subunits DKC1, NOP10, NHP2 and GAR1, and a telomerase RNA template component (TERC). The telomerase holoenzyme complex is associated with TEP1, SMG6/EST1A and POT1. Interacts with the chaperonin-containing T-complex (TRiC) complex; which mediates the folding of WRAP53/TCAB1. Interacts with COIL. Interacts with SMN1. Interacts with RNF8. Interacts with histone H2AX. Phosphorylated at Ser-64 by ATM in response to DNA damage, promoting its interaction with histone H2AX and localization to sites of DNA double-strand breaks.

It localises to the nucleus. The protein localises to the cajal body. The protein resides in the chromosome. Its subcellular location is the telomere. Its function is as follows. RNA chaperone that plays a key role in telomere maintenance and RNA localization to Cajal bodies. Specifically recognizes and binds the Cajal body box (CAB box) present in both small Cajal body RNAs (scaRNAs) and telomerase RNA template component (TERC). Essential component of the telomerase holoenzyme complex, a ribonucleoprotein complex essential for the replication of chromosome termini that elongates telomeres in most eukaryotes. In the telomerase holoenzyme complex, required to stimulate the catalytic activity of the complex. Acts by specifically binding the CAB box of the TERC RNA and controlling the folding of the CR4/CR5 region of the TERC RNA, a critical step for telomerase activity. In addition, also controls telomerase holoenzyme complex localization to Cajal body. During S phase, required for delivery of TERC to telomeres during S phase and for telomerase activity. In addition to its role in telomere maintenance, also required for Cajal body formation, probably by mediating localization of scaRNAs to Cajal bodies. Also plays a role in DNA repair: phosphorylated by ATM in response to DNA damage and relocalizes to sites of DNA double-strand breaks to promote the repair of DNA double-strand breaks. Acts by recruiting the ubiquitin ligase RNF8 to DNA breaks and promote both homologous recombination (HR) and non-homologous end joining (NHEJ). This is Telomerase Cajal body protein 1 from Bos taurus (Bovine).